Here is a 506-residue protein sequence, read N- to C-terminus: Histidine ammonia-lyase (506 aa).

Positions 143–145 (ASG) form a cross-link, 5-imidazolinone (Ala-Gly). A 2,3-didehydroalanine (Ser) modification is found at Ser144.

This sequence belongs to the PAL/histidase family. Contains an active site 4-methylidene-imidazol-5-one (MIO), which is formed autocatalytically by cyclization and dehydration of residues Ala-Ser-Gly.

It localises to the cytoplasm. The enzyme catalyses L-histidine = trans-urocanate + NH4(+). It participates in amino-acid degradation; L-histidine degradation into L-glutamate; N-formimidoyl-L-glutamate from L-histidine: step 1/3. The chain is Histidine ammonia-lyase from Salmonella dublin (strain CT_02021853).